Reading from the N-terminus, the 435-residue chain is ATP-dependent RNA helicase DBP8 (435 aa).

Residues 4-32 carry the Q motif motif; sequence SEFKSLGCSKWLVEALNAMKIVQPTAIQK. Residues 35–211 form the Helicase ATP-binding domain; it reads IPEILKGRDC…DAPQTEGKPP (177 aa). 48 to 55 is an ATP binding site; it reads ANTGSGKT. A DEAD box motif is present at residues 157–160; the sequence is DEAD. Residues 244–391 form the Helicase C-terminal domain; the sequence is YLYQILTSEK…FTDVGDTAVI (148 aa). The segment covering 409 to 429 has biased composition (basic and acidic residues); it reads MDKEGFGERRKLQKRKNESKE. Residues 409 to 435 form a disordered region; it reads MDKEGFGERRKLQKRKNESKEKTHRRT.

It belongs to the DEAD box helicase family. DDX49/DBP8 subfamily.

It is found in the nucleus. It localises to the nucleolus. The enzyme catalyses ATP + H2O = ADP + phosphate + H(+). ATP-binding RNA helicase involved in 40S ribosomal subunit biogenesis and is required for the normal formation of 18S rRNAs through pre-rRNA processing at A0, A1 and A2 sites. Required for vegetative growth. This chain is ATP-dependent RNA helicase DBP8 (DBP8), found in Kluyveromyces lactis (strain ATCC 8585 / CBS 2359 / DSM 70799 / NBRC 1267 / NRRL Y-1140 / WM37) (Yeast).